The chain runs to 73 residues: Signaling peptide TAXIMIN 2 (73 aa).

The first 27 residues, 1-27 (MGDCRPLGFLIGLPFALVALVLALVGA), serve as a signal peptide directing secretion.

Confined to the vasculature of various organs, including seedling roots, leaves, cotyledons, sepals and petals. Also accumulates in root hair cells.

The protein resides in the secreted. Functionally, signaling peptide involved in the regulation of lateral organs separation. In Arabidopsis thaliana (Mouse-ear cress), this protein is Signaling peptide TAXIMIN 2.